We begin with the raw amino-acid sequence, 114 residues long: Aspartate 1-decarboxylase (114 aa).

Catalysis depends on S25, which acts as the Schiff-base intermediate with substrate; via pyruvic acid. Position 25 is a pyruvic acid (Ser) (S25). T57 is a substrate binding site. Y58 acts as the Proton donor in catalysis. Position 73–75 (73–75 (GAA)) interacts with substrate.

The protein belongs to the PanD family. Heterooctamer of four alpha and four beta subunits. It depends on pyruvate as a cofactor. Post-translationally, is synthesized initially as an inactive proenzyme, which is activated by self-cleavage at a specific serine bond to produce a beta-subunit with a hydroxyl group at its C-terminus and an alpha-subunit with a pyruvoyl group at its N-terminus.

Its subcellular location is the cytoplasm. The catalysed reaction is L-aspartate + H(+) = beta-alanine + CO2. Its pathway is cofactor biosynthesis; (R)-pantothenate biosynthesis; beta-alanine from L-aspartate: step 1/1. Catalyzes the pyruvoyl-dependent decarboxylation of aspartate to produce beta-alanine. The sequence is that of Aspartate 1-decarboxylase from Thermotoga sp. (strain RQ2).